Consider the following 343-residue polypeptide: 3-isopropylmalate dehydrogenase (343 aa).

Positions 94, 104, 128, and 218 each coordinate substrate. Residues Asp-218, Asp-242, and Asp-246 each coordinate Mg(2+). An NAD(+)-binding site is contributed by 278–290 (GSAPDIAGQNKAN).

The protein belongs to the isocitrate and isopropylmalate dehydrogenases family. LeuB type 2 subfamily. As to quaternary structure, homodimer. Mg(2+) is required as a cofactor. It depends on Mn(2+) as a cofactor.

Its subcellular location is the cytoplasm. The catalysed reaction is (2R,3S)-3-isopropylmalate + NAD(+) = 4-methyl-2-oxopentanoate + CO2 + NADH. The protein operates within amino-acid biosynthesis; L-leucine biosynthesis; L-leucine from 3-methyl-2-oxobutanoate: step 3/4. Catalyzes the oxidation of 3-carboxy-2-hydroxy-4-methylpentanoate (3-isopropylmalate) to 3-carboxy-4-methyl-2-oxopentanoate. The product decarboxylates to 4-methyl-2 oxopentanoate. The protein is 3-isopropylmalate dehydrogenase of Bifidobacterium longum subsp. infantis (strain ATCC 15697 / DSM 20088 / JCM 1222 / NCTC 11817 / S12).